Consider the following 211-residue polypeptide: Nucleoside triphosphate pyrophosphatase (211 aa).

Aspartate 75 acts as the Proton acceptor in catalysis.

It belongs to the Maf family. The cofactor is a divalent metal cation.

It is found in the cytoplasm. It carries out the reaction a ribonucleoside 5'-triphosphate + H2O = a ribonucleoside 5'-phosphate + diphosphate + H(+). The enzyme catalyses a 2'-deoxyribonucleoside 5'-triphosphate + H2O = a 2'-deoxyribonucleoside 5'-phosphate + diphosphate + H(+). Its function is as follows. Nucleoside triphosphate pyrophosphatase. May have a dual role in cell division arrest and in preventing the incorporation of modified nucleotides into cellular nucleic acids. This Prochlorococcus marinus (strain NATL1A) protein is Nucleoside triphosphate pyrophosphatase.